Here is a 284-residue protein sequence, read N- to C-terminus: Bifunctional protein FolD (284 aa).

NADP(+) contacts are provided by residues 166-168 (GAS) and I232.

This sequence belongs to the tetrahydrofolate dehydrogenase/cyclohydrolase family. As to quaternary structure, homodimer.

It catalyses the reaction (6R)-5,10-methylene-5,6,7,8-tetrahydrofolate + NADP(+) = (6R)-5,10-methenyltetrahydrofolate + NADPH. The enzyme catalyses (6R)-5,10-methenyltetrahydrofolate + H2O = (6R)-10-formyltetrahydrofolate + H(+). The protein operates within one-carbon metabolism; tetrahydrofolate interconversion. Catalyzes the oxidation of 5,10-methylenetetrahydrofolate to 5,10-methenyltetrahydrofolate and then the hydrolysis of 5,10-methenyltetrahydrofolate to 10-formyltetrahydrofolate. The chain is Bifunctional protein FolD from Shewanella baltica (strain OS223).